We begin with the raw amino-acid sequence, 242 residues long: Glucosamine-6-phosphate deaminase (242 aa).

Catalysis depends on aspartate 67, which acts as the Proton acceptor; for enolization step. Catalysis depends on asparagine 136, which acts as the For ring-opening step. The active-site Proton acceptor; for ring-opening step is the histidine 138. Residue glutamate 143 is the For ring-opening step of the active site.

Belongs to the glucosamine/galactosamine-6-phosphate isomerase family. NagB subfamily.

The enzyme catalyses alpha-D-glucosamine 6-phosphate + H2O = beta-D-fructose 6-phosphate + NH4(+). It functions in the pathway amino-sugar metabolism; N-acetylneuraminate degradation; D-fructose 6-phosphate from N-acetylneuraminate: step 5/5. Catalyzes the reversible isomerization-deamination of glucosamine 6-phosphate (GlcN6P) to form fructose 6-phosphate (Fru6P) and ammonium ion. In Alkaliphilus metalliredigens (strain QYMF), this protein is Glucosamine-6-phosphate deaminase.